The primary structure comprises 334 residues: Sterol 4-C-methyltransferase strm-1 (334 aa).

The protein belongs to the class I-like SAM-binding methyltransferase superfamily. Erg6/SMT family. In terms of tissue distribution, expressed in the pharynx and hypodermal syncytium.

It catalyses the reaction 5alpha-cholest-7-en-3-one + S-adenosyl-L-methionine = 4alpha-methyl-5alpha-cholest-7-en-3-one + S-adenosyl-L-homocysteine + H(+). The protein operates within steroid hormone biosynthesis; dafachronic acid biosynthesis. Functionally, catalyzes the methyl transfer from S-adenosyl-methionine to the C-4 of the A-ring sterols such as lathosterone (5alpha-cholest-7-en-3-one) thereby rendering them unsuitable as ligand precursors. May irreversibly shunt sterols away from hormone dafachronic acid production. Dafachronic acids act as ligands and bind directly to the nuclear hormone receptor (NHR) daf-12 suppressing dauer formation and inducing reproductive growth. By reducing the biosynthesis of dafachronic acids, this methyltransferase can regulate dauer larva formation. This Caenorhabditis elegans protein is Sterol 4-C-methyltransferase strm-1 (strm-1).